The sequence spans 417 residues: MLNNKIDFSKYDPKLWFAIEQEKKRQENHIELIASENYTSNYVMDVQGSQLTNKYAEGYPGKRYYGGCEYVDIIEELAIERAKKLFNADYANVQPHSGSQANFSVYTALLNPGDTILGMKLSHGGHLTHGSSVNFSGKMYNVISYGVDENGEINYEELLRLTKKYKPKMIIGGFSAYSGICNWKKMRFIADNADAYFVVDMAHVAGLVAAGIYPNPINYAHVVTSTTHKTLAGPRGGLILAKNGDDILYKKLNLSVFPGAQGGPLMHVIAAKAIAFKEALEPKFKTYQKQIVKNSKVMVERFLEKGYKIISGHTFNHLFLIDLTNKKITGKDADIILSKANITVNKNTIPNDLKSPFITSGIRIGTAAVTRRGFKENEVSRISDWITSILNNVDDHNNVLQIKKKVLEMCLKYPVYI.

Residues Leu-121 and 125 to 127 (GHL) each bind (6S)-5,6,7,8-tetrahydrofolate. The residue at position 229 (Lys-229) is an N6-(pyridoxal phosphate)lysine. Residue 355–357 (SPF) coordinates (6S)-5,6,7,8-tetrahydrofolate.

This sequence belongs to the SHMT family. Homodimer. It depends on pyridoxal 5'-phosphate as a cofactor.

It is found in the cytoplasm. The enzyme catalyses (6R)-5,10-methylene-5,6,7,8-tetrahydrofolate + glycine + H2O = (6S)-5,6,7,8-tetrahydrofolate + L-serine. Its pathway is one-carbon metabolism; tetrahydrofolate interconversion. It functions in the pathway amino-acid biosynthesis; glycine biosynthesis; glycine from L-serine: step 1/1. Catalyzes the reversible interconversion of serine and glycine with tetrahydrofolate (THF) serving as the one-carbon carrier. This reaction serves as the major source of one-carbon groups required for the biosynthesis of purines, thymidylate, methionine, and other important biomolecules. Also exhibits THF-independent aldolase activity toward beta-hydroxyamino acids, producing glycine and aldehydes, via a retro-aldol mechanism. The sequence is that of Serine hydroxymethyltransferase from Buchnera aphidicola subsp. Acyrthosiphon pisum (strain APS) (Acyrthosiphon pisum symbiotic bacterium).